Here is a 281-residue protein sequence, read N- to C-terminus: Urease accessory protein UreD 2 (281 aa).

It belongs to the UreD family. UreD, UreF and UreG form a complex that acts as a GTP-hydrolysis-dependent molecular chaperone, activating the urease apoprotein by helping to assemble the nickel containing metallocenter of UreC. The UreE protein probably delivers the nickel.

The protein resides in the cytoplasm. Required for maturation of urease via the functional incorporation of the urease nickel metallocenter. This chain is Urease accessory protein UreD 2, found in Pseudomonas syringae pv. tomato (strain ATCC BAA-871 / DC3000).